The following is a 230-amino-acid chain: 2,3-bisphosphoglycerate-dependent phosphoglycerate mutase (230 aa).

Substrate contacts are provided by residues 10–17 (RHGESKWN), 23–24 (TG), R62, 89–92 (ERNY), K100, 116–117 (RR), and 185–186 (GN). H11 (tele-phosphohistidine intermediate) is an active-site residue. E89 acts as the Proton donor/acceptor in catalysis.

Belongs to the phosphoglycerate mutase family. BPG-dependent PGAM subfamily. As to quaternary structure, homodimer.

The catalysed reaction is (2R)-2-phosphoglycerate = (2R)-3-phosphoglycerate. It participates in carbohydrate degradation; glycolysis; pyruvate from D-glyceraldehyde 3-phosphate: step 3/5. Catalyzes the interconversion of 2-phosphoglycerate and 3-phosphoglycerate. In Buchnera aphidicola subsp. Cinara cedri (strain Cc), this protein is 2,3-bisphosphoglycerate-dependent phosphoglycerate mutase.